The primary structure comprises 436 residues: Enolase (436 aa).

Gln-167 contacts (2R)-2-phosphoglycerate. Glu-209 (proton donor) is an active-site residue. Positions 246, 291, and 318 each coordinate Mg(2+). Positions 343, 372, 373, and 394 each coordinate (2R)-2-phosphoglycerate. Lys-343 (proton acceptor) is an active-site residue.

The protein belongs to the enolase family. As to quaternary structure, component of the RNA degradosome, a multiprotein complex involved in RNA processing and mRNA degradation. Mg(2+) is required as a cofactor.

It is found in the cytoplasm. The protein localises to the secreted. The protein resides in the cell surface. It carries out the reaction (2R)-2-phosphoglycerate = phosphoenolpyruvate + H2O. It participates in carbohydrate degradation; glycolysis; pyruvate from D-glyceraldehyde 3-phosphate: step 4/5. Catalyzes the reversible conversion of 2-phosphoglycerate (2-PG) into phosphoenolpyruvate (PEP). It is essential for the degradation of carbohydrates via glycolysis. This Glaesserella parasuis serovar 5 (strain SH0165) (Haemophilus parasuis) protein is Enolase.